Here is a 434-residue protein sequence, read N- to C-terminus: MLDSKFLRQDIEQTAARLAARGYELDVATVTALEEKRKTLQVKTQELQSQRNASAKAIGQAKAKGEDAQPLLDAVANLGSELDAAKAQQDVVLAAINDIALAIPNLPDESVPAGKDEDDNVEILTWGTPKKFDFDVKDHVDVGQDLNGLDFEMGVKISGARFTVMRGQVARMHRALTQYMLDTHTDKNGYTEMYVPYLVNSASLYGTSQLPKFAGDLFHTLGLVNDDGEQQSGFSLIPTAEVPLTNSARDEIYDESDLPIRLTAHTPCFRSEAGSYGRDTRGLIRQHQFDKVELVQLVKPEDSMATLEELTGHAEQILQELELPYRKVILCMGDMGFGSAKTYDLEVWLPAQNTYREISSCSNMADFQARRMQARFRREGAKKPELLHTLNGSGLAVGRTLVAILENYQQADGSVVVPEVLRPYMGGLEVIGKQ.

Position 239–241 (239–241 (TAE)) interacts with L-serine. 270 to 272 (RSE) is a binding site for ATP. E293 is a binding site for L-serine. Residue 357–360 (EISS) coordinates ATP. S393 serves as a coordination point for L-serine.

The protein belongs to the class-II aminoacyl-tRNA synthetase family. Type-1 seryl-tRNA synthetase subfamily. As to quaternary structure, homodimer. The tRNA molecule binds across the dimer.

The protein resides in the cytoplasm. The catalysed reaction is tRNA(Ser) + L-serine + ATP = L-seryl-tRNA(Ser) + AMP + diphosphate + H(+). It carries out the reaction tRNA(Sec) + L-serine + ATP = L-seryl-tRNA(Sec) + AMP + diphosphate + H(+). The protein operates within aminoacyl-tRNA biosynthesis; selenocysteinyl-tRNA(Sec) biosynthesis; L-seryl-tRNA(Sec) from L-serine and tRNA(Sec): step 1/1. Functionally, catalyzes the attachment of serine to tRNA(Ser). Is also able to aminoacylate tRNA(Sec) with serine, to form the misacylated tRNA L-seryl-tRNA(Sec), which will be further converted into selenocysteinyl-tRNA(Sec). The protein is Serine--tRNA ligase of Pseudoalteromonas translucida (strain TAC 125).